Here is a 1018-residue protein sequence, read N- to C-terminus: Pikachurin (1018 aa).

The signal sequence occupies residues 1–23 (MDLIRGVLLRLLLLASSLGPGAA). Fibronectin type-III domains lie at 37 to 145 (PPLD…TLPQ) and 153 to 248 (APQQ…TARP). An N-linked (GlcNAc...) asparagine glycan is attached at asparagine 47. The disordered stretch occupies residues 228 to 274 (VNPHGSSPRSQPSSTIRTARPEESGSGRYGPHYATDTEAGEDDDTFE). Over residues 231 to 244 (HGSSPRSQPSSTIR) the composition is skewed to polar residues. Positions 265 to 274 (EAGEDDDTFE) are enriched in acidic residues. The EGF-like 1 domain maps to 352-390 (FDTSCDETVCSADSFCVSDYTWGGSRCHCNLGKGGESCS). Intrachain disulfides connect cysteine 356–cysteine 367, cysteine 361–cysteine 378, cysteine 380–cysteine 389, cysteine 543–cysteine 573, cysteine 578–cysteine 589, cysteine 583–cysteine 599, cysteine 601–cysteine 610, cysteine 797–cysteine 808, cysteine 802–cysteine 817, cysteine 819–cysteine 828, and cysteine 988–cysteine 1015. The 179-residue stretch at 395 to 573 (IQYPQFFGHS…ALSGADVGEC (179 aa)) folds into the Laminin G-like 1 domain. EGF-like domains lie at 574–611 (SSGICDEASCINGGTCMASKADSYICLCPLGFRGRHCE) and 793–829 (AAHPCVGSPCAHGGSCRPRKEGYECDCPLGFEGLHCQ). Positions 618–797 (IPQFKESLRS…VNVENAAHPC (180 aa)) constitute a Laminin G-like 2 domain. The Laminin G-like 3 domain occupies 836 to 1015 (IEIPQFIGRS…AVDGKNINTC (180 aa)).

In terms of assembly, interacts with DAG1 alpha-dystroglycan. Interacts with GPR158 and GPR179; transsynaptic interaction is required for synaptic organization of photoreceptor cells. In terms of processing, O-glycosylated; contains chondroitin sulfate and heparan sulfate.

The protein resides in the secreted. Its subcellular location is the extracellular space. The protein localises to the extracellular matrix. It is found in the synaptic cleft. It localises to the presynaptic active zone. In terms of biological role, involved in both the retinal photoreceptor ribbon synapse formation and physiological functions of visual perception. Plays a key role in the synaptic organization of photoreceptors by mediating transsynaptic interaction between alpha-dystroglycan and GPR179 on the postsynaptic membrane. Necessary for proper bipolar dendritic tip apposition to the photoreceptor ribbon synapse. Promotes matrix assembly and cell adhesiveness. In Bos taurus (Bovine), this protein is Pikachurin (EGFLAM).